The following is a 79-amino-acid chain: Ponericin-W-like 32.1 (79 aa).

A signal peptide spans 1–23 (MKCKKQLLVIFFAYFLVVNESEA). The propeptide occupies 49–79 (RALMKRDLEDIMDPYQKNLKLDRYLRRLAMD).

The protein belongs to the non-disulfide-bridged peptide (NDBP) superfamily. Medium-length antimicrobial peptide (group 3) family. Ponericin-W subfamily. As to expression, expressed by the venom gland.

It is found in the secreted. The protein resides in the target cell membrane. Its function is as follows. Antimicrobial peptide with potent activity against a range of Gram-positive and Gram-negative bacteria. Has high hemolytic activity against erythrocytes. May act by disrupting the integrity of the bacterial cell membrane. The sequence is that of Ponericin-W-like 32.1 from Lychas mucronatus (Chinese swimming scorpion).